The primary structure comprises 461 residues: Ribulose bisphosphate carboxylase (461 aa).

A substrate-binding site is contributed by asparagine 112. Catalysis depends on lysine 167, which acts as the Proton acceptor. Residue lysine 169 coordinates substrate. Mg(2+)-binding residues include lysine 192, aspartate 194, and glutamate 195. N6-carboxylysine is present on lysine 192. Residue histidine 288 is the Proton acceptor of the active site. The substrate site is built by arginine 289, histidine 322, and serine 369.

It belongs to the RuBisCO large chain family. Type II subfamily. As to quaternary structure, homodimer. Mg(2+) is required as a cofactor.

The enzyme catalyses 2 (2R)-3-phosphoglycerate + 2 H(+) = D-ribulose 1,5-bisphosphate + CO2 + H2O. It catalyses the reaction D-ribulose 1,5-bisphosphate + O2 = 2-phosphoglycolate + (2R)-3-phosphoglycerate + 2 H(+). In terms of biological role, ruBisCO catalyzes two reactions: the carboxylation of D-ribulose 1,5-bisphosphate, the primary event in carbon dioxide fixation, as well as the oxidative fragmentation of the pentose substrate. Both reactions occur simultaneously and in competition at the same active site. This is Ribulose bisphosphate carboxylase from Rhodopseudomonas palustris (strain BisB5).